Reading from the N-terminus, the 108-residue chain is MLDKKFHIKKGDTVSVVTGKDKSKTGTVLRILPKRDGVLVEGLNIVKRHTRARGNEPGGIVEKEAPLHVSNVMLYCGKCEKPVRAKKAILEDGKKVRVCVKCGEAFDK.

The protein belongs to the universal ribosomal protein uL24 family. Part of the 50S ribosomal subunit.

Functionally, one of two assembly initiator proteins, it binds directly to the 5'-end of the 23S rRNA, where it nucleates assembly of the 50S subunit. In terms of biological role, one of the proteins that surrounds the polypeptide exit tunnel on the outside of the subunit. The polypeptide is Large ribosomal subunit protein uL24 (Geobacter sulfurreducens (strain ATCC 51573 / DSM 12127 / PCA)).